The sequence spans 476 residues: ATP sulfurylase 2 (476 aa).

The transit peptide at Met1–Ser56 directs the protein to the chloroplast.

It belongs to the sulfate adenylyltransferase family. As to quaternary structure, homotetramer. Mostly expressed in leaves or cotyledons.

It is found in the plastid. Its subcellular location is the chloroplast. The protein localises to the cytoplasm. The enzyme catalyses sulfate + ATP + H(+) = adenosine 5'-phosphosulfate + diphosphate. It functions in the pathway sulfur metabolism; hydrogen sulfide biosynthesis; sulfite from sulfate: step 1/3. In Arabidopsis thaliana (Mouse-ear cress), this protein is ATP sulfurylase 2 (APS2).